Reading from the N-terminus, the 468-residue chain is MSSILPFTPPVVKRLLGWKKSASGSSGAGGGGEQNGQEEKWCEKAVKSLVKKLKKTGQLDELEKAITTQNRNTKCVTIPSNCSEIWGLSTPNTIEQWDTSGLYSYPDQTRSLDGRLQVSHRKGLPHVIYCRLWRWPDLHSHHELRAIETCEYAFNLKKDEVCVNPYHYQRVETPVLPPVLVPRHTEILTELPPLDDYTNSIPENTNFPTGIEPPNNYIPETPPPGYISEDGEASDQQMNQSMDTGSPAELSPSTLSPVNHGMDLQPVTYSEPAFWCSIAYYELNQRVGETFHASQPSLTVDGFTDPSNSERFCLGLLSNVNRNATVEMTRRHIGRGVRLYYIGGEVFAECLSDSAIFVQSPNCNQRYGWHPATVCKIPPGCNLKIFNNQEFAALLAQSVNQGFEAVYQLTRMCTIRMSFVKGWGAEYRRQTVTSTPCWIELHLNGPLQWLDKVLTQMGSPSVRCSSMS.

Positions 10 to 177 (PVVKRLLGWK…YQRVETPVLP (168 aa)) constitute an MH1 domain. The Zn(2+) site is built by C75, C150, C162, and H167. Residues 224-254 (PGYISEDGEASDQQMNQSMDTGSPAELSPST) form a disordered region. A compositionally biased stretch (polar residues) spans 234–244 (SDQQMNQSMDT). An MH2 domain is found at 275–468 (WCSIAYYELN…SPSVRCSSMS (194 aa)).

It belongs to the dwarfin/SMAD family.

The protein localises to the cytoplasm. The protein resides in the nucleus. Functionally, promotes differentiation of dorsal tissues. May be involved in the mediation of Ndr2 signaling during mesoderm and axis formation during embryogenesis. The sequence is that of Mothers against decapentaplegic homolog 2 (smad2) from Danio rerio (Zebrafish).